A 110-amino-acid chain; its full sequence is UPF0060 membrane protein RPA3838 (110 aa).

Helical transmembrane passes span L4–W24, P31–A51, A59–E79, and Q85–P105.

The protein belongs to the UPF0060 family.

It is found in the cell inner membrane. The polypeptide is UPF0060 membrane protein RPA3838 (Rhodopseudomonas palustris (strain ATCC BAA-98 / CGA009)).